The following is a 232-amino-acid chain: MKIGIIGAMEEEVTLLRDKIDNRQTITLGGCEIYTGQLNGTEVALLKSGIGKVAAALGATLLLEHCKPDVIINTGSAGGLASTLKVGDIVVSDEARYHDADVTAFGYEYGQLPGCPAGFKADDKLIAAAESCIRELNLNAVRGLIVSGDAFINGSVGLAKIRHNFPDAVAVEMEATAIAHVCHNFNVPFVVVRAISDVADQQSHLSFDEFLAVAAKQSTLMVETLVQKLAHG.

Glu12 (proton acceptor) is an active-site residue. Substrate contacts are provided by residues Gly78, Ile152, and 173–174 (ME). Asp197 serves as the catalytic Proton donor.

It belongs to the PNP/UDP phosphorylase family. MtnN subfamily. Homodimer.

It catalyses the reaction S-adenosyl-L-homocysteine + H2O = S-(5-deoxy-D-ribos-5-yl)-L-homocysteine + adenine. The catalysed reaction is S-methyl-5'-thioadenosine + H2O = 5-(methylsulfanyl)-D-ribose + adenine. It carries out the reaction 5'-deoxyadenosine + H2O = 5-deoxy-D-ribose + adenine. Its pathway is amino-acid biosynthesis; L-methionine biosynthesis via salvage pathway; S-methyl-5-thio-alpha-D-ribose 1-phosphate from S-methyl-5'-thioadenosine (hydrolase route): step 1/2. Functionally, catalyzes the irreversible cleavage of the glycosidic bond in both 5'-methylthioadenosine (MTA) and S-adenosylhomocysteine (SAH/AdoHcy) to adenine and the corresponding thioribose, 5'-methylthioribose and S-ribosylhomocysteine, respectively. Also cleaves 5'-deoxyadenosine, a toxic by-product of radical S-adenosylmethionine (SAM) enzymes, into 5-deoxyribose and adenine. Thus, is required for in vivo function of the radical SAM enzymes biotin synthase and lipoic acid synthase, that are inhibited by 5'-deoxyadenosine accumulation. The protein is 5'-methylthioadenosine/S-adenosylhomocysteine nucleosidase of Salmonella paratyphi B (strain ATCC BAA-1250 / SPB7).